Consider the following 162-residue polypeptide: RNA pyrophosphohydrolase (162 aa).

Positions 7–149 (KYRPCVGIML…KKEVYKTVIE (143 aa)) constitute a Nudix hydrolase domain. The short motif at 40–61 (GGVDDGEELEQAALRELLEEVG) is the Nudix box element.

The protein belongs to the Nudix hydrolase family. RppH subfamily. It depends on a divalent metal cation as a cofactor.

Functionally, accelerates the degradation of transcripts by removing pyrophosphate from the 5'-end of triphosphorylated RNA, leading to a more labile monophosphorylated state that can stimulate subsequent ribonuclease cleavage. The polypeptide is RNA pyrophosphohydrolase (Wolbachia pipientis wMel).